Here is a 186-residue protein sequence, read N- to C-terminus: Adenylate kinase (186 aa).

10-15 serves as a coordination point for ATP; the sequence is GVGKGT. The interval 30–59 is NMP; that stretch reads STGDIFRYNIKNKTELGLEAMSYTDKGELV. Residues Thr-31, Arg-36, 57–59, 85–88, and Gln-92 each bind AMP; these read ELV and GYPR. The tract at residues 126–136 is LID; the sequence is KRAAEQGRADD. Arg-127 provides a ligand contact to ATP. AMP-binding residues include Arg-133 and Arg-144. Gly-172 is an ATP binding site.

It belongs to the adenylate kinase family. As to quaternary structure, monomer.

It is found in the cytoplasm. It catalyses the reaction AMP + ATP = 2 ADP. The protein operates within purine metabolism; AMP biosynthesis via salvage pathway; AMP from ADP: step 1/1. Catalyzes the reversible transfer of the terminal phosphate group between ATP and AMP. Plays an important role in cellular energy homeostasis and in adenine nucleotide metabolism. This chain is Adenylate kinase, found in Bifidobacterium longum (strain NCC 2705).